A 78-amino-acid polypeptide reads, in one-letter code: Keratin-associated protein 6-5 (78 aa).

Positions 3–76 (GYYGNYYGGR…GSGYGSGFGY (74 aa)) are 25 X 2 AA repeats of G-[YCGS].

The protein belongs to the KRTAP type 6 family. As to quaternary structure, interacts with hair keratins. In terms of tissue distribution, strong expression in narrowly defined pattern restricted to the lower and middle cortical regions of the hair shaft in both developing and cycling hair. During hair follicle regression (catagen), expression levels decrease until expression is no longer detectable in follicles at resting stage (telogen).

In terms of biological role, in the hair cortex, hair keratin intermediate filaments are embedded in an interfilamentous matrix, consisting of hair keratin-associated proteins (KRTAP), which are essential for the formation of a rigid and resistant hair shaft through their extensive disulfide bond cross-linking with abundant cysteine residues of hair keratins. The matrix proteins include the high-sulfur and high-glycine-tyrosine keratins. This Mus musculus (Mouse) protein is Keratin-associated protein 6-5 (Krtap6-5).